The primary structure comprises 161 residues: Phenolic acid decarboxylase PadC (161 aa).

Substrate is bound by residues Y11 and Y13. Y19 functions as the Proton donor in the catalytic mechanism. R41 is a binding site for substrate. E64 (proton acceptor) is an active-site residue.

The protein belongs to the PadC family. Homodimer.

The enzyme catalyses (E)-4-coumarate + H(+) = 4-vinylphenol + CO2. The catalysed reaction is (E)-cinnamate + H(+) = styrene + CO2. It catalyses the reaction (E)-ferulate + H(+) = 2-methoxy-4-vinylphenol + CO2. Functionally, involved in the decarboxylation and detoxification of phenolic derivatives. It is able to catalyze the decarboxylation of ferulic, p-coumaric and caffeic acids. The protein is Phenolic acid decarboxylase PadC (padC) of Bacillus subtilis (strain 168).